The primary structure comprises 165 residues: Phosphopantetheine adenylyltransferase (165 aa).

Ser10 is a binding site for substrate. Residues 10–11 (SF) and His18 each bind ATP. Substrate is bound by residues Lys42, Leu74, and Arg88. Residues 89–91 (GLR), Glu99, and 124–130 (YSFLSSS) each bind ATP.

The protein belongs to the bacterial CoaD family. In terms of assembly, homohexamer. Requires Mg(2+) as cofactor.

It localises to the cytoplasm. The enzyme catalyses (R)-4'-phosphopantetheine + ATP + H(+) = 3'-dephospho-CoA + diphosphate. The protein operates within cofactor biosynthesis; coenzyme A biosynthesis; CoA from (R)-pantothenate: step 4/5. In terms of biological role, reversibly transfers an adenylyl group from ATP to 4'-phosphopantetheine, yielding dephospho-CoA (dPCoA) and pyrophosphate. The sequence is that of Phosphopantetheine adenylyltransferase from Anoxybacillus flavithermus (strain DSM 21510 / WK1).